The chain runs to 210 residues: Transcriptional regulator MxiE (210 aa).

Residues tyrosine 99–isoleucine 199 form the HTH araC/xylS-type domain. 2 DNA-binding regions (H-T-H motif) span residues lysine 118–leucine 139 and isoleucine 166–leucine 189.

Its function is as follows. Necessary for the secretion of ipa invasins. Probable transcriptional regulatory protein. The polypeptide is Transcriptional regulator MxiE (mxiE) (Shigella flexneri).